The following is a 105-amino-acid chain: Nucleoid-associated protein PTH_0052 (105 aa).

It belongs to the YbaB/EbfC family. Homodimer.

It localises to the cytoplasm. Its subcellular location is the nucleoid. Binds to DNA and alters its conformation. May be involved in regulation of gene expression, nucleoid organization and DNA protection. This chain is Nucleoid-associated protein PTH_0052, found in Pelotomaculum thermopropionicum (strain DSM 13744 / JCM 10971 / SI).